We begin with the raw amino-acid sequence, 134 residues long: Profilin-4 (134 aa).

Cys-13 and Cys-118 form a disulfide bridge. Residues 84-100 (AVIRGKKGSGGITIKKT) carry the Involved in PIP2 interaction motif. At Thr-114 the chain carries Phosphothreonine.

It belongs to the profilin family. As to quaternary structure, occurs in many kinds of cells as a complex with monomeric actin in a 1:1 ratio. Phosphorylated by MAP kinases.

It is found in the cytoplasm. It localises to the cytoskeleton. Binds to actin and affects the structure of the cytoskeleton. At high concentrations, profilin prevents the polymerization of actin, whereas it enhances it at low concentrations. This Olea europaea (Common olive) protein is Profilin-4.